We begin with the raw amino-acid sequence, 234 residues long: Thiamine import ATP-binding protein ThiQ (234 aa).

The ABC transporter domain maps to 2 to 230 (LVLDDVQYTY…HPSKTLQAFV (229 aa)). 32-39 (GPSGAGKS) provides a ligand contact to ATP.

The protein belongs to the ABC transporter superfamily. Thiamine importer (TC 3.A.1.19.1) family. In terms of assembly, the complex is composed of two ATP-binding proteins (ThiQ), two transmembrane proteins (ThiP) and a solute-binding protein (ThiB).

The protein localises to the cell inner membrane. The enzyme catalyses thiamine(out) + ATP + H2O = thiamine(in) + ADP + phosphate + H(+). Its function is as follows. Part of the ABC transporter complex ThiBPQ involved in thiamine import. Responsible for energy coupling to the transport system. This is Thiamine import ATP-binding protein ThiQ from Vibrio parahaemolyticus serotype O3:K6 (strain RIMD 2210633).